Consider the following 214-residue polypeptide: Cell division protein SepF (214 aa).

Residues 24–120 form a disordered region; sequence DNYEEYEERK…NTRRAQESTA (97 aa). Residues 30–40 are compositionally biased toward basic and acidic residues; that stretch reads EERKAVNEPPR. Residues 55 to 67 are compositionally biased toward polar residues; the sequence is ESYSQPAYTQQSE. Residues 69 to 98 show a composition bias toward basic and acidic residues; sequence VVEKPSARYRSAEAHQERDTQQAAYTEKKV. Residues 101 to 120 show a composition bias toward polar residues; sequence MRSSNQSATTNTRRAQESTA.

It belongs to the SepF family. Homodimer. Interacts with FtsZ.

It is found in the cytoplasm. Functionally, cell division protein that is part of the divisome complex and is recruited early to the Z-ring. Probably stimulates Z-ring formation, perhaps through the cross-linking of FtsZ protofilaments. Its function overlaps with FtsA. The polypeptide is Cell division protein SepF (Enterococcus faecalis (strain ATCC 700802 / V583)).